The chain runs to 194 residues: Fe/S biogenesis protein NfuA (194 aa).

2 residues coordinate [4Fe-4S] cluster: Cys152 and Cys155.

This sequence belongs to the NfuA family. In terms of assembly, homodimer. It depends on [4Fe-4S] cluster as a cofactor.

Involved in iron-sulfur cluster biogenesis. Binds a 4Fe-4S cluster, can transfer this cluster to apoproteins, and thereby intervenes in the maturation of Fe/S proteins. Could also act as a scaffold/chaperone for damaged Fe/S proteins. The sequence is that of Fe/S biogenesis protein NfuA from Teredinibacter turnerae (strain ATCC 39867 / T7901).